We begin with the raw amino-acid sequence, 36 residues long: Insecticidal toxin LaIT1 (36 aa).

2 disulfide bridges follow: Cys11–Cys23 and Cys17–Cys29.

As to expression, expressed by the venom gland.

It localises to the secreted. Affects the activity of both ryanodine-sensitive calcium-release channels RyR1 and RyR2 with high potency. At lower concentrations the toxin increases full openings of the RyRs, and at higher concentrations it inhibits full openings and induce openings to subconductance levels and reduces the number of full conductance openings. The different actions may be attributed to the toxins binding at different sites on the RyRs, with binding at a high-affinity site mediating the increase in full openings and the induction of subconductance states evoked upon binding to a lower-affinity site. Shows insect lethality against crickets and common cutworms (only shows paralysis against cockroaches), but no toxicity is observed in mice. The protein is Insecticidal toxin LaIT1 of Liocheles australasiae (Dwarf wood scorpion).